A 234-amino-acid chain; its full sequence is Probable transcriptional regulatory protein PSPTO_3162 (234 aa).

The protein belongs to the TACO1 family.

Its subcellular location is the cytoplasm. The polypeptide is Probable transcriptional regulatory protein PSPTO_3162 (Pseudomonas syringae pv. tomato (strain ATCC BAA-871 / DC3000)).